The chain runs to 140 residues: Large ribosomal subunit protein uL11 (140 aa).

It belongs to the universal ribosomal protein uL11 family. As to quaternary structure, part of the ribosomal stalk of the 50S ribosomal subunit. Interacts with L10 and the large rRNA to form the base of the stalk. L10 forms an elongated spine to which L12 dimers bind in a sequential fashion forming a multimeric L10(L12)X complex. One or more lysine residues are methylated.

In terms of biological role, forms part of the ribosomal stalk which helps the ribosome interact with GTP-bound translation factors. This chain is Large ribosomal subunit protein uL11, found in Syntrophotalea carbinolica (strain DSM 2380 / NBRC 103641 / GraBd1) (Pelobacter carbinolicus).